Reading from the N-terminus, the 479-residue chain is Protein ORD (479 aa).

The tract at residues 102–140 (KEEETEPESESDLDEGPSTSKQALERMVQRAERKAKEAS) is disordered. The segment covering 104 to 116 (EETEPESESDLDE) has biased composition (acidic residues). Positions 124-140 (ALERMVQRAERKAKEAS) are enriched in basic and acidic residues.

Interacts with Sce.

It localises to the nucleus. It is found in the chromosome. Its subcellular location is the centromere. Functionally, essential for proper maintenance of sister-chromatid cohesion in both male and female meiosis. Mutations in ord cause premature separation of the sister chromatids in meiosis I and random segregation in both meiotic divisions. Required for chiasma maintenance in female meiosis. Mutations in ord reduce recombination in female meiosis. In Drosophila melanogaster (Fruit fly), this protein is Protein ORD (ord).